Reading from the N-terminus, the 520-residue chain is Glucose starvation modulator protein 1 (520 aa).

Positions 20 to 48 (CVFCHEKHLQCSNERPCKNCVKRGLAHEC) form a DNA-binding region, zn(2)-C6 fungal-type. Residues 376 to 445 (DYEKLSQLNS…FRLFKTVAVG (70 aa)) form the PAS domain.

This sequence belongs to the ERT1/acuK family.

It localises to the nucleus. Its function is as follows. Transcription factor which regulates nonfermentable carbon utilization. The chain is Glucose starvation modulator protein 1 (GSM1) from Scheffersomyces stipitis (strain ATCC 58785 / CBS 6054 / NBRC 10063 / NRRL Y-11545) (Yeast).